Reading from the N-terminus, the 137-residue chain is Proofreading thioesterase EntH (137 aa).

Residue Glu63 is the Nucleophile or proton acceptor of the active site.

The protein belongs to the thioesterase PaaI family. Homotetramer. Dimer of dimers. Interacts specifically with the aryl carrier protein (ArCP) domain of EntB.

The protein localises to the cytoplasm. The protein operates within siderophore biosynthesis; enterobactin biosynthesis. Functionally, required for optimal enterobactin synthesis. Acts as a proofreading enzyme that prevents EntB misacylation by hydrolyzing the thioester bound existing between EntB and wrongly charged molecules. The chain is Proofreading thioesterase EntH from Cronobacter sakazakii (strain ATCC BAA-894) (Enterobacter sakazakii).